Consider the following 391-residue polypeptide: Nutrient and stress factor 1 (391 aa).

Polar residues predominate over residues 1-27; the sequence is MENTTNRNTAGVLTSSNGNFATNSVAA. The tract at residues 1-37 is disordered; sequence MENTTNRNTAGVLTSSNGNFATNSVAASTPKRSKSAR. C2H2-type zinc fingers lie at residues 41-66 and 72-95; these read FKCT…IRKH and FQCP…ESVH. Residues 91-149 form a disordered region; sequence RESVHAHKNHHSTSSHQRKPSSSSLSSSSSASSSSSASSSTSYSDPYRKTNINSGNMPM. Residues 96–109 are compositionally biased toward basic residues; that stretch reads AHKNHHSTSSHQRK. The span at 110-134 shows a compositional bias: low complexity; that stretch reads PSSSSLSSSSSASSSSSASSSTSYS. Ser-162 and Ser-163 each carry phosphoserine. Residues 326–374 form a disordered region; the sequence is AFSQPPNGNKNNNMSSSKNGGKGGENFKNTDDRNDNNNKKRSETLSESD. Residues 332 to 344 show a composition bias toward low complexity; that stretch reads NGNKNNNMSSSKN. Over residues 353-369 the composition is skewed to basic and acidic residues; it reads KNTDDRNDNNNKKRSET.

The protein localises to the nucleus. Functionally, transcription factor that participates in the transcriptional activation of glucose-repressed genes during exponential growth in non-fermentable carbon conditions. Also involved in salt-stress response. The sequence is that of Nutrient and stress factor 1 (USV1) from Saccharomyces cerevisiae (strain ATCC 204508 / S288c) (Baker's yeast).